A 789-amino-acid chain; its full sequence is Cadherin-6 (789 aa).

Residues 1-18 (MRTYRYFLLLFWVGQPYP) form the signal peptide. Residues 19-53 (TFSNPLSKRTSGFPAKRRALELSANSRNELSRSKR) constitute a propeptide that is removed on maturation. 5 Cadherin domains span residues 54-159 (SWMW…EPIF), 160-268 (TKDV…PPRF), 269-383 (PQST…PPVF), 384-486 (SKPA…DNAP), and 487-608 (EFAE…LIHP). The Extracellular portion of the chain corresponds to 54 to 615 (SWMWNQFFLL…IHPTGLSTGA (562 aa)). N-linked (GlcNAc...) asparagine glycosylation is present at asparagine 255. Positions 259-288 (TDVNDNPPRFPQSTYQFKTPESSPPGTPIG) are disordered. Positions 269–279 (PQSTYQFKTPE) are enriched in polar residues. 4 N-linked (GlcNAc...) asparagine glycosylation sites follow: asparagine 399, asparagine 437, asparagine 455, and asparagine 536. The chain crosses the membrane as a helical span at residues 616-636 (LVAILLCIVILLVTVVLFAAL). The Cytoplasmic portion of the chain corresponds to 637-789 (RRQRKKEPLI…YGGMDSDKDS (153 aa)). Phosphoserine occurs at positions 785 and 789.

As to expression, highly expressed in kidney and brain.

Its subcellular location is the cell membrane. In terms of biological role, cadherins are calcium-dependent cell adhesion proteins. They preferentially interact with themselves in a homophilic manner in connecting cells; cadherins may thus contribute to the sorting of heterogeneous cell types. The protein is Cadherin-6 (Cdh6) of Rattus norvegicus (Rat).